Reading from the N-terminus, the 237-residue chain is MMSASPPHLLIVDDDERIRGLLQKFLIRNGFLVTAGRDAAHARRLLSGLEFNLIVLDVMMPGEDGLSLTRDLRTKMATPILLLTARGETRERIEGLEAGADDYLPKPFEPKELLLRINAILRRVPEAVTAGPKYLSLGPLRYDLDRGELSQGDQPVRLTATEAALMRIFAAHAGEVIGRTELIEELGRDRSASAEEAAGDRAVDVQITRLRRKIEPDPREPRYLQTVRGLGYMLAPD.

One can recognise a Response regulatory domain in the interval 8 to 121 (HLLIVDDDER…ELLLRINAIL (114 aa)). A 4-aspartylphosphate modification is found at aspartate 57. The H-T-H motif DNA-binding region spans 77 to 95 (ATPILLLTARGETRERIEG). Residues 132-236 (PKYLSLGPLR…VRGLGYMLAP (105 aa)) constitute a DNA-binding region (ompR/PhoB-type).

Its function is as follows. Necessary for photosynthetic and respiratory growth. Probable promoter-specific protein mediating the interaction between DNA and RNA polymerase. In Rhodobacter capsulatus (strain ATCC BAA-309 / NBRC 16581 / SB1003), this protein is Protein PetR (petR).